The following is a 96-amino-acid chain: Cytochrome c-553 (96 aa).

Residues 1-19 (MKKVIVALGVLAFANVLMA) form the signal peptide. Heme c is bound by residues cysteine 29, cysteine 32, histidine 33, and methionine 73.

Belongs to the cytochrome c family. In terms of processing, binds 1 heme c group covalently per subunit.

It is found in the periplasm. Natural electron acceptor for a formate dehydrogenase. The sequence is that of Cytochrome c-553 from Helicobacter pylori (strain J99 / ATCC 700824) (Campylobacter pylori J99).